A 152-amino-acid polypeptide reads, in one-letter code: Cornifin-A (152 aa).

The segment at 20-40 (EVKQPCQPPPQEPCAPKTKEP) is disordered. 14 tandem repeats follow at residues 27-34 (PPPQEPCA), 35-42 (PKTKEPCH), 43-49 (PIPEPCN), 50-57 (PKVPEPCQ), 58-65 (PKVPEPCQ), 66-73 (PKVPEPCQ), 74-81 (PKVPEPCQ), 82-89 (PKVPEPCQ), 90-97 (PKVPEPCQ), 98-105 (PKVPEPCH), 106-113 (PKAPEPCH), 114-121 (PVVPEPCQ), 122-129 (PVAPEPCQ), and 130-137 (PVVPEPCP). Positions 27 to 137 (PPPQEPCAPK…CQPVVPEPCP (111 aa)) are 14 X 8 AA approximate tandem repeats.

The protein belongs to the cornifin (SPRR) family. In terms of tissue distribution, in squamous epithelia lining the nasal vestibule and in the hard palate.

The protein resides in the cytoplasm. Functionally, cross-linked envelope protein of keratinocytes. It is a keratinocyte protein that first appears in the cell cytosol, but ultimately becomes cross-linked to membrane proteins by transglutaminase. All that results in the formation of an insoluble envelope beneath the plasma membrane. In Rattus norvegicus (Rat), this protein is Cornifin-A (Sprr1a).